Consider the following 321-residue polypeptide: Lipoyl synthase (321 aa).

Residues Cys-68, Cys-73, Cys-79, Cys-94, Cys-98, Cys-101, and Ser-308 each contribute to the [4Fe-4S] cluster site. Residues Phe-80 to Thr-297 form the Radical SAM core domain.

Belongs to the radical SAM superfamily. Lipoyl synthase family. It depends on [4Fe-4S] cluster as a cofactor.

It is found in the cytoplasm. It catalyses the reaction [[Fe-S] cluster scaffold protein carrying a second [4Fe-4S](2+) cluster] + N(6)-octanoyl-L-lysyl-[protein] + 2 oxidized [2Fe-2S]-[ferredoxin] + 2 S-adenosyl-L-methionine + 4 H(+) = [[Fe-S] cluster scaffold protein] + N(6)-[(R)-dihydrolipoyl]-L-lysyl-[protein] + 4 Fe(3+) + 2 hydrogen sulfide + 2 5'-deoxyadenosine + 2 L-methionine + 2 reduced [2Fe-2S]-[ferredoxin]. Its pathway is protein modification; protein lipoylation via endogenous pathway; protein N(6)-(lipoyl)lysine from octanoyl-[acyl-carrier-protein]: step 2/2. Its function is as follows. Catalyzes the radical-mediated insertion of two sulfur atoms into the C-6 and C-8 positions of the octanoyl moiety bound to the lipoyl domains of lipoate-dependent enzymes, thereby converting the octanoylated domains into lipoylated derivatives. This chain is Lipoyl synthase, found in Tolumonas auensis (strain DSM 9187 / NBRC 110442 / TA 4).